The chain runs to 308 residues: Cytochrome c biogenesis protein CcsA (308 aa).

The next 7 helical transmembrane spans lie at 17–37 (IISI…VGLC), 43–63 (GMIT…IYSG), 70–90 (LYES…VPYF), 142–162 (MLLS…LLVI), 213–233 (VIGL…VWAN), 246–260 (ETWA…AIYL), and 274–294 (AIVA…VNLL).

The protein belongs to the CcmF/CycK/Ccl1/NrfE/CcsA family. In terms of assembly, may interact with Ccs1.

The protein localises to the plastid. Its subcellular location is the chloroplast thylakoid membrane. Functionally, required during biogenesis of c-type cytochromes (cytochrome c6 and cytochrome f) at the step of heme attachment. The protein is Cytochrome c biogenesis protein CcsA of Nymphaea alba (White water-lily).